The following is a 404-amino-acid chain: Argininosuccinate synthase (404 aa).

9–17 is an ATP binding site; that stretch reads AYSGGLDTS. An L-citrulline-binding site is contributed by Tyr86. Gly116 contributes to the ATP binding site. Thr118, Asn122, and Asp123 together coordinate L-aspartate. Asn122 serves as a coordination point for L-citrulline. Residues Arg126, Ser174, Ser183, Glu259, and Tyr271 each contribute to the L-citrulline site.

The protein belongs to the argininosuccinate synthase family. Type 1 subfamily. In terms of assembly, homotetramer.

It is found in the cytoplasm. The enzyme catalyses L-citrulline + L-aspartate + ATP = 2-(N(omega)-L-arginino)succinate + AMP + diphosphate + H(+). It functions in the pathway amino-acid biosynthesis; L-arginine biosynthesis; L-arginine from L-ornithine and carbamoyl phosphate: step 2/3. This Listeria monocytogenes serotype 4b (strain CLIP80459) protein is Argininosuccinate synthase.